A 581-amino-acid chain; its full sequence is Pyridine nucleotide-disulfide oxidoreductase domain-containing protein 2 (581 aa).

38 to 71 contributes to the FAD binding site; it reads VVIGAGHNGLVAAAYLQRLGVNTAVFERRHVIGG.

It belongs to the carotenoid/retinoid oxidoreductase family. In terms of assembly, interacts with COX5B; this interaction may contribute to localize PYROXD2 to the inner face of the inner mitochondrial membrane.

The protein localises to the mitochondrion matrix. Its function is as follows. Probable oxidoreductase that may play a role as regulator of mitochondrial function. The chain is Pyridine nucleotide-disulfide oxidoreductase domain-containing protein 2 from Homo sapiens (Human).